A 929-amino-acid chain; its full sequence is Isoleucine--tRNA ligase (929 aa).

The short motif at 58 to 68 (PYANGDIHIGH) is the 'HIGH' region element. Residue Glu563 coordinates L-isoleucyl-5'-AMP. Residues 605–609 (KMSKS) carry the 'KMSKS' region motif. Lys608 contributes to the ATP binding site. 4 residues coordinate Zn(2+): Cys892, Cys895, Cys912, and Cys915.

This sequence belongs to the class-I aminoacyl-tRNA synthetase family. IleS type 1 subfamily. As to quaternary structure, monomer. The cofactor is Zn(2+).

It localises to the cytoplasm. The catalysed reaction is tRNA(Ile) + L-isoleucine + ATP = L-isoleucyl-tRNA(Ile) + AMP + diphosphate. Functionally, catalyzes the attachment of isoleucine to tRNA(Ile). As IleRS can inadvertently accommodate and process structurally similar amino acids such as valine, to avoid such errors it has two additional distinct tRNA(Ile)-dependent editing activities. One activity is designated as 'pretransfer' editing and involves the hydrolysis of activated Val-AMP. The other activity is designated 'posttransfer' editing and involves deacylation of mischarged Val-tRNA(Ile). The chain is Isoleucine--tRNA ligase from Neisseria gonorrhoeae (strain NCCP11945).